The sequence spans 273 residues: HLA class II histocompatibility antigen, DO beta chain (273 aa).

The first 26 residues, 1 to 26, serve as a signal peptide directing secretion; that stretch reads MGSGWVPWVVALLVNLTRLDSSMTQG. The beta-1 stretch occupies residues 27–120; that stretch reads TDSPEDFVIQ…LGAPFTVGRK (94 aa). Topologically, residues 27 to 224 are extracellular; the sequence is TDSPEDFVIQ…RAQSEYSWRK (198 aa). Cystine bridges form between Cys41-Cys105 and Cys143-Cys199. Asn45 carries N-linked (GlcNAc...) asparagine glycosylation. Positions 121-214 are beta-2; it reads VQPEVTVYPE…SLLSPVSVEW (94 aa). The Ig-like C1-type domain occupies 123-213; it reads PEVTVYPERT…SSLLSPVSVE (91 aa). Residues 215–224 form a connecting peptide region; sequence RAQSEYSWRK. Residues 225–245 traverse the membrane as a helical segment; that stretch reads MLSGIAAFLLGLIFLLVGIVI. The Cytoplasmic segment spans residues 246-273; sequence QLRAQKGYVRTQMSGNEVSRAVLLPQSC.

Belongs to the MHC class II family. In terms of assembly, heterodimer of an alpha chain (DOA) and a beta chain (DOB). Forms a heterotetrameric complex with an HLA-DM molecule during intracellular transport in endosomal/lysosomal compartments in B-cells.

The protein resides in the endosome membrane. The protein localises to the lysosome membrane. In terms of biological role, important modulator in the HLA class II restricted antigen presentation pathway by interaction with the HLA-DM molecule in B-cells. Modifies peptide exchange activity of HLA-DM. The chain is HLA class II histocompatibility antigen, DO beta chain (HLA-DOB) from Homo sapiens (Human).